We begin with the raw amino-acid sequence, 272 residues long: Microcin B17-processing protein McbC (272 aa).

To R.leguminosarum TfxB which is involved in the processing of trifolitoxin.

The protein resides in the cytoplasm. Functionally, necessary to process the inactive microcin B17 (McbA) precursor into the active peptide. The chain is Microcin B17-processing protein McbC (mcbC) from Escherichia coli.